A 248-amino-acid polypeptide reads, in one-letter code: Ubiquinone biosynthesis O-methyltransferase (248 aa).

4 residues coordinate S-adenosyl-L-methionine: Arg-41, Gly-72, Asp-93, and Met-136.

The protein belongs to the methyltransferase superfamily. UbiG/COQ3 family.

It carries out the reaction a 3-demethylubiquinol + S-adenosyl-L-methionine = a ubiquinol + S-adenosyl-L-homocysteine + H(+). The enzyme catalyses a 3-(all-trans-polyprenyl)benzene-1,2-diol + S-adenosyl-L-methionine = a 2-methoxy-6-(all-trans-polyprenyl)phenol + S-adenosyl-L-homocysteine + H(+). It participates in cofactor biosynthesis; ubiquinone biosynthesis. Functionally, O-methyltransferase that catalyzes the 2 O-methylation steps in the ubiquinone biosynthetic pathway. In Sinorhizobium fredii (strain NBRC 101917 / NGR234), this protein is Ubiquinone biosynthesis O-methyltransferase.